We begin with the raw amino-acid sequence, 292 residues long: tRNA pseudouridine synthase B (292 aa).

The active-site Nucleophile is the aspartate 38.

This sequence belongs to the pseudouridine synthase TruB family. Type 1 subfamily.

It catalyses the reaction uridine(55) in tRNA = pseudouridine(55) in tRNA. Its function is as follows. Responsible for synthesis of pseudouridine from uracil-55 in the psi GC loop of transfer RNAs. This chain is tRNA pseudouridine synthase B, found in Streptococcus pneumoniae serotype 4 (strain ATCC BAA-334 / TIGR4).